The primary structure comprises 281 residues: Pantothenate synthetase (281 aa).

30 to 37 (MGNLHLGH) is an ATP binding site. The active-site Proton donor is His-37. Gln-61 lines the (R)-pantoate pocket. Beta-alanine is bound at residue Gln-61. 149-152 (GRKD) lines the ATP pocket. Gln-155 provides a ligand contact to (R)-pantoate. Residues Ile-178 and 186–189 (MSSR) each bind ATP.

Belongs to the pantothenate synthetase family. Homodimer.

It localises to the cytoplasm. The catalysed reaction is (R)-pantoate + beta-alanine + ATP = (R)-pantothenate + AMP + diphosphate + H(+). Its pathway is cofactor biosynthesis; (R)-pantothenate biosynthesis; (R)-pantothenate from (R)-pantoate and beta-alanine: step 1/1. Its function is as follows. Catalyzes the condensation of pantoate with beta-alanine in an ATP-dependent reaction via a pantoyl-adenylate intermediate. This is Pantothenate synthetase from Shewanella sediminis (strain HAW-EB3).